A 1179-amino-acid polypeptide reads, in one-letter code: MTGQLVQYGRHRQRRSYARINEVLELPNLIEIQTASYDWFLEEGLREMFQDISPIEDFTGNLSLEFVDYSLGDPKYPVDEAKERDVTYNAPLRVKVRLINNETGEVKEQEVFMGDFPLMTETGTFIINGAERVIVSQLVRSPSVYYNEKIDKNGKRGIGATVIPNRGAWLEFETDAKDIAYVRIDRTRKLPITVLLRALGFGTDQEITDLLGENEYLRNTLEKDNTENAEKALLEIYERLRPGEPPTVENAKSLLVSRFFDPKRYDLAHVGRYKMNKKLHMKNRLFNQILAEPIVDPETGEVIAEKGEKLERKLLDKILPYLERAEDRFGESVLSPHEGVLEDEITIQSVKIIDPTDPNGERELTVIGNGGVTNDVKNITPADILSSISYFFNLLHEVGGTDDIDHLGNRRLRSVGELLQNQFRIGLSRMERVVRERMSIQDTSSVTPQQLINIRPVIASIKEFFGSSQLSQFMDQTNPLGELTHKRRLSALGPGGLTRERAGFEVRDVHYSHYGRMCPIETPEGPNIGLINSLSSYAKVNKFGFIESPYRRVDPETGKVTNKIDYLTADEQDNYIVAQANSPLDEDSRFQNEEVISRFQEDNIVVSRDKIDYMDVSPKQVVSAATACIPFLENDDSNRALMGANMQRQAVPLMKPQAPIVGTGMEYVNGKDSGAAVICHHDGVIERVEAKEVYVRRISIVDGKEVEGDLDRYGLQKYKRSNQGTCYNQRPIVSQGDRVTKGEVLADGPSMEDGELALGQNVLVGFMTWEGYNYEDAIIMSERLVKDDVYTSIHIEEFESEARDTKLGPEEITRDIPNVGEDALKNLDEHGIIRVGAEVTDGDILVGKVTPKGVTELSAEERLLHAIFGEKAREVRDTSLRVPHGGGGIVLDVKIFNREDGDELPPGVNQLVRAYIVQKRKIHEGDKMAGRHGNKGVISKILPEEDMPYLPDGTPIDIMLNPLGVPSRMNIGQVFELHLGMAARQLGIHVASPVFDGAREEDVWETLEEAGMPRDAKTVLYDGRTGEAFDNRVSVGVMYMIKLAHMVDDKLHARSTGPYSLVTQQPLGGKAQFGGQRFGEMEVWALEAYGAAYTLQEILTVKSDDTVGRVKTYEAIVKGDNVPEPGVPESFKVLIKELQSLGMDVKMLSSNEDEIDMRELEEEEVQAATKLNIDVEESE.

It belongs to the RNA polymerase beta chain family. The RNAP catalytic core consists of 2 alpha, 1 beta, 1 beta' and 1 omega subunit. When a sigma factor is associated with the core the holoenzyme is formed, which can initiate transcription.

It carries out the reaction RNA(n) + a ribonucleoside 5'-triphosphate = RNA(n+1) + diphosphate. In terms of biological role, DNA-dependent RNA polymerase catalyzes the transcription of DNA into RNA using the four ribonucleoside triphosphates as substrates. The chain is DNA-directed RNA polymerase subunit beta from Oceanobacillus iheyensis (strain DSM 14371 / CIP 107618 / JCM 11309 / KCTC 3954 / HTE831).